Reading from the N-terminus, the 93-residue chain is Large ribosomal subunit protein bL27 (93 aa).

A propeptide spanning residues 1–10 (MLLKLQIQLF) is cleaved from the precursor.

The protein belongs to the bacterial ribosomal protein bL27 family. Post-translationally, the N-terminus is cleaved by ribosomal processing cysteine protease Prp.

In Phytoplasma australiense, this protein is Large ribosomal subunit protein bL27.